The primary structure comprises 433 residues: Protein translocase subunit SecY (433 aa).

10 consecutive transmembrane segments (helical) span residues Ile17–Gly37, Ile71–Val91, Leu117–Val137, Gly141–Val161, Leu184–Leu204, Pro212–Phe232, Gly268–Phe288, Tyr310–Phe330, Leu366–Asn386, and Tyr388–Asp408.

The protein belongs to the SecY/SEC61-alpha family. Component of the Sec protein translocase complex. Heterotrimer consisting of SecY, SecE and SecG subunits. The heterotrimers can form oligomers, although 1 heterotrimer is thought to be able to translocate proteins. Interacts with the ribosome. Interacts with SecDF, and other proteins may be involved. Interacts with SecA.

The protein resides in the cell inner membrane. Functionally, the central subunit of the protein translocation channel SecYEG. Consists of two halves formed by TMs 1-5 and 6-10. These two domains form a lateral gate at the front which open onto the bilayer between TMs 2 and 7, and are clamped together by SecE at the back. The channel is closed by both a pore ring composed of hydrophobic SecY resides and a short helix (helix 2A) on the extracellular side of the membrane which forms a plug. The plug probably moves laterally to allow the channel to open. The ring and the pore may move independently. The protein is Protein translocase subunit SecY of Rickettsia felis (strain ATCC VR-1525 / URRWXCal2) (Rickettsia azadi).